Reading from the N-terminus, the 766-residue chain is Serine/threonine-protein kinase PLK4 (766 aa).

The region spanning Y14–M267 is the Protein kinase domain. ATP-binding positions include L20 to V28 and K43. D138 (proton acceptor) is an active-site residue. In terms of domain architecture, Cryptic POLO box 1 (CPB1) spans E379–K496. The Cryptic POLO box 2 (CPB2) domain occupies T497–P600. Residues P658–T737 form the POLO box domain.

The protein belongs to the protein kinase superfamily. Ser/Thr protein kinase family. CDC5/Polo subfamily. In terms of assembly, homodimer. In terms of processing, ubiquitinated by the SCF(Slimb) ubiquitin ligase complex; leading to its degradation by the proteasome during interphase and regulating centriole number and ensuring the block to centriole reduplication.

The protein resides in the cytoplasm. It localises to the cytoskeleton. The protein localises to the microtubule organizing center. Its subcellular location is the centrosome. It is found in the centriole. It catalyses the reaction L-seryl-[protein] + ATP = O-phospho-L-seryl-[protein] + ADP + H(+). The enzyme catalyses L-threonyl-[protein] + ATP = O-phospho-L-threonyl-[protein] + ADP + H(+). Its function is as follows. Serine/threonine-protein kinase that plays a central role in centriole duplication. Able to trigger procentriole formation on the surface of the mother centriole cylinder, using mother centriole as a platform, leading to the recruitment of centriole biogenesis proteins such as sas-6. When overexpressed, it is able to induce centrosome amplification through the simultaneous generation of multiple procentrioles adjoining each parental centriole during S phase. Centrosome amplification following overexpression can initiate tumorigenesis, highlighting the importance of centrosome regulation in cancers. The protein is Serine/threonine-protein kinase PLK4 (SAK) of Drosophila yakuba (Fruit fly).